Reading from the N-terminus, the 377-residue chain is MAATEDERLAGSGEGERLDFLRDRHVRFFQRCLQVLPERYSSLETSRLTIAFFALSGLDMLDSLDVVNKDDIIEWIYSLQVLPTEDRSNLNRCGFRGSSYLGIPFNPSKAPGTAHPYDSGHIAMTYTGLSCLVILGDDLSRVNKEACLAGLRALQLEDGSFCAVPEGSENDMRFVYCASCICYMLNNWSGMDMKKAITYIRRSMSYDNGLAQGAGLESHGGSTFCGIASLCLMGKLEEVFSEKELNRIKRWCIMRQQNGYHGRPNKPVDTCYSFWVGATLKLLKIFQYTNFEKNRNYILSTQDRLVGGFAKWPDSHPDALHAYFGICGLSLMEESGICKVHPALNVSTRTSERLLDLHQSWKTKDSKQCSENVHIST.

PFTB repeat units lie at residues 144–186 (KEAC…YMLN), 193–234 (MKKA…CLMG), 245–284 (LNRI…KLLK), and 291–333 (FEKN…SLME). Geranylgeranyl diphosphate contacts are provided by residues 219 to 221 (HGG) and 263 to 266 (RPNK). Zn(2+) contacts are provided by Asp-269 and Cys-271. 272 to 275 (YSFW) is a geranylgeranyl diphosphate binding site. His-321 contacts Zn(2+).

The protein belongs to the protein prenyltransferase subunit beta family. Heterodimer of FNTA and PGGT1B. PGGT1B mediates interaction with substrate peptides. It depends on Zn(2+) as a cofactor. Requires Mg(2+) as cofactor.

It catalyses the reaction geranylgeranyl diphosphate + L-cysteinyl-[protein] = S-geranylgeranyl-L-cysteinyl-[protein] + diphosphate. Functionally, catalyzes the transfer of a geranyl-geranyl moiety from geranyl-geranyl pyrophosphate to a cysteine at the fourth position from the C-terminus of proteins having the C-terminal sequence Cys-aliphatic-aliphatic-X. Known substrates include RAC1, RAC2, RAP1A and RAP1B. In Homo sapiens (Human), this protein is Geranylgeranyl transferase type-1 subunit beta (PGGT1B).